Consider the following 91-residue polypeptide: Large ribosomal subunit protein uL23c (91 aa).

This sequence belongs to the universal ribosomal protein uL23 family. In terms of assembly, part of the 50S ribosomal subunit.

The protein localises to the plastid. It is found in the chloroplast. In terms of biological role, binds to 23S rRNA. In Chaetosphaeridium globosum (Charophycean green alga), this protein is Large ribosomal subunit protein uL23c (rpl23).